Consider the following 36-residue polypeptide: Photosystem I reaction center subunit VIII (36 aa).

Residues 4 to 24 (FSLPSILVPLVGLVLPAIAMA) traverse the membrane as a helical segment.

Belongs to the PsaI family.

It is found in the plastid. It localises to the chloroplast thylakoid membrane. May help in the organization of the PsaL subunit. In Piper cenocladum (Ant piper), this protein is Photosystem I reaction center subunit VIII.